Reading from the N-terminus, the 196-residue chain is RNA polymerase II subunit B1 CTD phosphatase RTR2 (196 aa).

An RTR1-type zinc finger spans residues 52-123 (YLARLLSPMS…LSQTPLHERR (72 aa)). 4 residues coordinate Zn(2+): Cys-75, Cys-80, Cys-99, and His-103.

This sequence belongs to the RPAP2 family.

It localises to the cytoplasm. The protein resides in the nucleus. The enzyme catalyses O-phospho-L-seryl-[protein] + H2O = L-seryl-[protein] + phosphate. It catalyses the reaction O-phospho-L-threonyl-[protein] + H2O = L-threonyl-[protein] + phosphate. Functionally, probable RNA polymerase II subunit B1 C-terminal domain (CTD) phosphatase that regulates RNA polymerase II transcription. May have functional redundancy with RTR1. The sequence is that of RNA polymerase II subunit B1 CTD phosphatase RTR2 (RTR2) from Saccharomyces cerevisiae (strain ATCC 204508 / S288c) (Baker's yeast).